The sequence spans 432 residues: Tol-Pal system protein TolB (432 aa).

The signal sequence occupies residues 1 to 21 (MSTLIRIALFALALMAGAAQA).

Belongs to the TolB family. As to quaternary structure, the Tol-Pal system is composed of five core proteins: the inner membrane proteins TolA, TolQ and TolR, the periplasmic protein TolB and the outer membrane protein Pal. They form a network linking the inner and outer membranes and the peptidoglycan layer.

Its subcellular location is the periplasm. In terms of biological role, part of the Tol-Pal system, which plays a role in outer membrane invagination during cell division and is important for maintaining outer membrane integrity. This Pseudomonas aeruginosa (strain ATCC 15692 / DSM 22644 / CIP 104116 / JCM 14847 / LMG 12228 / 1C / PRS 101 / PAO1) protein is Tol-Pal system protein TolB.